The primary structure comprises 289 residues: Ketose 3-epimerase (289 aa).

Glu146 acts as the Proton donor/acceptor in catalysis. Glu146 contributes to the Mn(2+) binding site. Substrate is bound by residues Glu152 and 179–182; that span reads DTYH. Mn(2+)-binding residues include Asp179 and His205. Arg211 provides a ligand contact to substrate. Glu240 serves as the catalytic Proton donor/acceptor. Glu240 contributes to the Mn(2+) binding site.

This sequence belongs to the hyi family. Homotetramer. Mg(2+) is required as a cofactor. Requires Mn(2+) as cofactor. It depends on Co(2+) as a cofactor.

The catalysed reaction is L-ribulose = L-xylulose. It carries out the reaction D-allulose = keto-D-fructose. It catalyses the reaction keto-L-tagatose = keto-L-sorbose. The enzyme catalyses D-ribulose = D-xylulose. The catalysed reaction is L-allulose = keto-L-fructose. It carries out the reaction keto-D-tagatose = keto-D-sorbose. In terms of biological role, catalyzes the reversible C-3 epimerization of several ketoses. Shows the highest enzymatic activity for the epimerization of L-ribulose to L-xylulose. Is also able to convert D-allulose (also known as D-psicose) to D-fructose and, to a lesser extent, L-tagatose to L-sorbose, D-ribulose to D-xylulose, L-allulose to L-fructose and D-tagatose to D-sorbose. In Arthrobacter globiformis, this protein is Ketose 3-epimerase.